The primary structure comprises 333 residues: Chemokine XC receptor 1 (333 aa).

Residues 1 to 31 (MESSGNPESTTFFYYDLQSQPCENQAWVFAT) are Extracellular-facing. The helical transmembrane segment at 32-59 (LATTVLYCLVFLLSLVGNSLVLWVLVKY) threads the bilayer. At 60-69 (ESLESLTNIF) the chain is on the cytoplasmic side. A helical transmembrane segment spans residues 70–89 (ILNLCLSDLVFACLLPVWIS). The Extracellular portion of the chain corresponds to 90–103 (PYHWGWVLGDFLCK). A disulfide bond links cysteine 102 and cysteine 175. Residues 104–125 (LLNMIFSISLYSSIFFLTIMTI) form a helical membrane-spanning segment. The Cytoplasmic portion of the chain corresponds to 126–142 (HRYLSVVSPLSTLRVPT). A helical transmembrane segment spans residues 143-167 (LRCRVLVTMAVWVASILSSILDTIF). Residues 168 to 190 (HKVLSSGCDYSELTWYLTSVYQH) are Extracellular-facing. A helical transmembrane segment spans residues 191-209 (NLFFLLSLGIILFCYVEIL). Residues 210-225 (RTLFRSRSKRRHRTVK) are Cytoplasmic-facing. A helical membrane pass occupies residues 226–250 (LIFAIVVAYFLSWGPYNFTLFLQTL). Over 251-267 (FRTQIIRSCEAKQQLEY) the chain is Extracellular. The chain crosses the membrane as a helical span at residues 268 to 291 (ALLICRNLAFSHCCFNPVLYVFVG). Residues 292 to 333 (VKFRTHLKHVLRQFWFCRLQAPSPASIPHSPGAFAYEGASFY) lie on the Cytoplasmic side of the membrane.

It belongs to the G-protein coupled receptor 1 family.

Its subcellular location is the cell membrane. Functionally, receptor for chemokines SCYC1 and SCYC2. Subsequently transduces a signal by increasing the intracellular calcium ions level. Receptor for XCL1/Lymphotactin. The protein is Chemokine XC receptor 1 (XCR1) of Homo sapiens (Human).